Consider the following 115-residue polypeptide: Mediator of RNA polymerase II transcription subunit 9 (115 aa).

The tract at residues 1–31 (MATGGTVRPAEEPEEEEEEEDEAVEEEEEED) is disordered. A compositionally biased stretch (acidic residues) spans 12–31 (EPEEEEEEEDEAVEEEEEED). Positions 31–107 (DYTFLPLVHD…SELLQKYKSL (77 aa)) form a coiled coil.

The protein belongs to the Mediator complex subunit 9 family. As to quaternary structure, component of the Mediator complex.

The protein localises to the nucleus. Its function is as follows. Component of the Mediator complex, a coactivator involved in the regulated transcription of nearly all RNA polymerase II-dependent genes. Mediator functions as a bridge to convey information from gene-specific regulatory proteins to the basal RNA polymerase II transcription machinery. Mediator is recruited to promoters by direct interactions with regulatory proteins and serves as a scaffold for the assembly of a functional preinitiation complex with RNA polymerase II and the general transcription factors. The protein is Mediator of RNA polymerase II transcription subunit 9 (med9) of Xenopus laevis (African clawed frog).